The primary structure comprises 365 residues: Aminomethyltransferase (365 aa).

Belongs to the GcvT family. As to quaternary structure, the glycine cleavage system is composed of four proteins: P, T, L and H.

It carries out the reaction N(6)-[(R)-S(8)-aminomethyldihydrolipoyl]-L-lysyl-[protein] + (6S)-5,6,7,8-tetrahydrofolate = N(6)-[(R)-dihydrolipoyl]-L-lysyl-[protein] + (6R)-5,10-methylene-5,6,7,8-tetrahydrofolate + NH4(+). Functionally, the glycine cleavage system catalyzes the degradation of glycine. The chain is Aminomethyltransferase from Aeromonas salmonicida (strain A449).